The chain runs to 347 residues: GMP reductase (347 aa).

108–131 (NDFLKLQRILALSPALRFICVDVA) provides a ligand contact to NADP(+). The K(+) site is built by G181 and G183. The Thioimidate intermediate role is filled by C186. Position 216 to 239 (216 to 239 (IVGDGGCTCPGDVAKAFGGGADFV)) interacts with NADP(+).

The protein belongs to the IMPDH/GMPR family. GuaC type 1 subfamily. As to quaternary structure, homotetramer.

It catalyses the reaction IMP + NH4(+) + NADP(+) = GMP + NADPH + 2 H(+). Catalyzes the irreversible NADPH-dependent deamination of GMP to IMP. It functions in the conversion of nucleobase, nucleoside and nucleotide derivatives of G to A nucleotides, and in maintaining the intracellular balance of A and G nucleotides. The polypeptide is GMP reductase (Tolumonas auensis (strain DSM 9187 / NBRC 110442 / TA 4)).